We begin with the raw amino-acid sequence, 887 residues long: MHSREIRQSFLDFFAAKSHTIVRSAPVIPADDPTLLFTNAGMNQFKDVFLAKGTRPYTRAADTQKCIRASGKHNDLEDVGRDTYHHTFFEMLGNWSFGDYYKEEAISWAWELLTEVWKLPADRLYATVYHDDDESARIWAEKTSIEPSHILRFGDKDNFWEMGETGPCGPCSEIHIDLTPDGSGKELVNAGDHRAIELWNLVFIQYDRQPDGRLEPLPQRHVDTGMGFERVCAVMQSKASNYDTDVFLPLFQRLSELTGVTYGASMDGRQDIAMRVIADHARTLTFALSDGAMPSNEGRGYVLRRILRRALRYSRDLGCSGPILHQLVGTLADSMGDVFGELRDRRDAVERIIRAEEESFITTLDRGMEIFGELAAATARAGGRMLKGEDAFKLYDTYGFPFDLTRLLATEAGLDVDGEGFEHCMQEQKSRARSDRREKQQTGDGAGSWQWFSDSHATTFLGYDRLAMPSTIIGAAHASGHLLLVLAETPFYAESGGQTGDRGWLESAAYRMQVTDTRKDGDSFVHVVSRAFDKVRDTEIDPMDIVIEEATPVDASVERILRQETERNHTATHLLHAALRRILGSHVQQKGSFVTSERLRFDFSHFSKMTPEEIQAVEAEVNEHIRCAAHVSKHADLPYDEAIAKGALAFFGDKYAERVRMVEVPGISAELCGGTHVDNIGQIGIFKIISESSAAAGIRRIEALTGRAAEMLLWKEYHELQDVRQQLKLKADEAVAEKLAELQEEKKELEKELAGLKSASVIDALVRDATSAEEIGGCRIVTKVLEGVDADTLRSAAMALREKLPVSAGLLCSIADGKVSLAAFSSDVAVKEKGIDAGKLIRLAAAAVKGGGGGRAELATAGGKNPDGVAEACRIFAEDVRRIAGAV.

A compositionally biased stretch (basic and acidic residues) spans 425-441 (MQEQKSRARSDRREKQQ). Residues 425-448 (MQEQKSRARSDRREKQQTGDGAGS) form a disordered region. Residues H569, H573, C672, and H676 each contribute to the Zn(2+) site.

This sequence belongs to the class-II aminoacyl-tRNA synthetase family. Requires Zn(2+) as cofactor.

The protein localises to the cytoplasm. It catalyses the reaction tRNA(Ala) + L-alanine + ATP = L-alanyl-tRNA(Ala) + AMP + diphosphate. Functionally, catalyzes the attachment of alanine to tRNA(Ala) in a two-step reaction: alanine is first activated by ATP to form Ala-AMP and then transferred to the acceptor end of tRNA(Ala). Also edits incorrectly charged Ser-tRNA(Ala) and Gly-tRNA(Ala) via its editing domain. The chain is Alanine--tRNA ligase from Chlorobium luteolum (strain DSM 273 / BCRC 81028 / 2530) (Pelodictyon luteolum).